We begin with the raw amino-acid sequence, 453 residues long: Pup--protein ligase (453 aa).

Glu-9 serves as a coordination point for Mg(2+). Arg-53 lines the ATP pocket. Tyr-55 provides a ligand contact to Mg(2+). Catalysis depends on Asp-57, which acts as the Proton acceptor. Glu-63 lines the Mg(2+) pocket. Residues Thr-66 and Trp-420 each contribute to the ATP site.

This sequence belongs to the Pup ligase/Pup deamidase family. Pup-conjugating enzyme subfamily.

It catalyses the reaction ATP + [prokaryotic ubiquitin-like protein]-L-glutamate + [protein]-L-lysine = ADP + phosphate + N(6)-([prokaryotic ubiquitin-like protein]-gamma-L-glutamyl)-[protein]-L-lysine.. The protein operates within protein degradation; proteasomal Pup-dependent pathway. It functions in the pathway protein modification; protein pupylation. In terms of biological role, catalyzes the covalent attachment of the prokaryotic ubiquitin-like protein modifier Pup to the proteasomal substrate proteins, thereby targeting them for proteasomal degradation. This tagging system is termed pupylation. The ligation reaction involves the side-chain carboxylate of the C-terminal glutamate of Pup and the side-chain amino group of a substrate lysine. In Nocardioides sp. (strain ATCC BAA-499 / JS614), this protein is Pup--protein ligase.